Consider the following 30-residue polypeptide: Trypsin inhibitor 4 (30 aa).

Intrachain disulfides connect Cys3–Cys20, Cys10–Cys22, and Cys16–Cys28.

Belongs to the protease inhibitor I7 (squash-type serine protease inhibitor) family.

The protein resides in the secreted. Inhibits trypsin; probably participates in a plant defense mechanism. This chain is Trypsin inhibitor 4, found in Momordica charantia (Bitter gourd).